The primary structure comprises 363 residues: UDP-N-acetylglucosamine--N-acetylmuramyl-(pentapeptide) pyrophosphoryl-undecaprenol N-acetylglucosamine transferase (363 aa).

UDP-N-acetyl-alpha-D-glucosamine is bound by residues 12 to 14 (TAG), R166, S196, and Q291.

The protein belongs to the glycosyltransferase 28 family. MurG subfamily.

It localises to the cell inner membrane. It catalyses the reaction di-trans,octa-cis-undecaprenyl diphospho-N-acetyl-alpha-D-muramoyl-L-alanyl-D-glutamyl-meso-2,6-diaminopimeloyl-D-alanyl-D-alanine + UDP-N-acetyl-alpha-D-glucosamine = di-trans,octa-cis-undecaprenyl diphospho-[N-acetyl-alpha-D-glucosaminyl-(1-&gt;4)]-N-acetyl-alpha-D-muramoyl-L-alanyl-D-glutamyl-meso-2,6-diaminopimeloyl-D-alanyl-D-alanine + UDP + H(+). The protein operates within cell wall biogenesis; peptidoglycan biosynthesis. Its function is as follows. Cell wall formation. Catalyzes the transfer of a GlcNAc subunit on undecaprenyl-pyrophosphoryl-MurNAc-pentapeptide (lipid intermediate I) to form undecaprenyl-pyrophosphoryl-MurNAc-(pentapeptide)GlcNAc (lipid intermediate II). The protein is UDP-N-acetylglucosamine--N-acetylmuramyl-(pentapeptide) pyrophosphoryl-undecaprenol N-acetylglucosamine transferase of Legionella pneumophila (strain Lens).